A 124-amino-acid polypeptide reads, in one-letter code: Small ribosomal subunit protein uS12 (124 aa).

Positions 1-27 (MPTINQLIRKPRKSQTEKTASPALQNC) are disordered. Residues 17–27 (EKTASPALQNC) show a composition bias toward polar residues. A 3-methylthioaspartic acid modification is found at Asp89.

Belongs to the universal ribosomal protein uS12 family. In terms of assembly, part of the 30S ribosomal subunit. Contacts proteins S8 and S17. May interact with IF1 in the 30S initiation complex.

With S4 and S5 plays an important role in translational accuracy. Functionally, interacts with and stabilizes bases of the 16S rRNA that are involved in tRNA selection in the A site and with the mRNA backbone. Located at the interface of the 30S and 50S subunits, it traverses the body of the 30S subunit contacting proteins on the other side and probably holding the rRNA structure together. The combined cluster of proteins S8, S12 and S17 appears to hold together the shoulder and platform of the 30S subunit. The polypeptide is Small ribosomal subunit protein uS12 (Borreliella afzelii (strain PKo) (Borrelia afzelii)).